The sequence spans 926 residues: OTU domain-containing protein 7A (926 aa).

The disordered stretch occupies residues 75–99 (PHVFNEGRGPKQPEREPQPGHKVER). Positions 82–99 (RGPKQPEREPQPGHKVER) are enriched in basic and acidic residues. Ser-119 carries the post-translational modification Phosphoserine. The interval 168–410 (ERDLIEQATM…AVDPGKDWEW (243 aa)) is TRAF-binding. The segment at 183 to 449 (AGRLNWWSTV…VTWIRIPSET (267 aa)) is catalytic. Positions 199–374 (LLPLATTGDG…QAHFSALVSM (176 aa)) constitute an OTU domain. Residue Asp-207 is part of the active site. Cys-210 serves as the catalytic Nucleophile. His-367 acts as the Proton acceptor in catalysis. 3 disordered regions span residues 452-514 (PLAQ…DSVA), 537-613 (GLVH…DAWK), and 668-768 (EQEQ…APAR). A compositionally biased stretch (low complexity) spans 481 to 491 (VCSNSNSNNGK). Residues 492-510 (NGKDKEKEKQRKEKDKTRA) are compositionally biased toward basic and acidic residues. The Nuclear localization signal signature appears at 494–509 (KDKEKEKQRKEKDKTR). 3 stretches are compositionally biased toward low complexity: residues 576 to 592 (GASASTSPSEKTTPSPT), 677 to 691 (ATAAAAAAAAAAATA), and 729 to 742 (PAAGRAARAAAGGT). Arg-880 is subject to Omega-N-methylarginine. The A20-type zinc-finger motif lies at 884-919 (GPVQRRCQRENCAFYGRAETEHYCSYCYREELRRRR). Positions 890, 895, 907, and 910 each coordinate Zn(2+).

It belongs to the peptidase C64 family.

The protein resides in the cytoplasm. It localises to the nucleus. The enzyme catalyses Thiol-dependent hydrolysis of ester, thioester, amide, peptide and isopeptide bonds formed by the C-terminal Gly of ubiquitin (a 76-residue protein attached to proteins as an intracellular targeting signal).. In terms of biological role, deubiquitinase, which cleaves 'Lys-11'-linked polyubiquitin chains. Might be required for PA28-20S proteasome assembly. The polypeptide is OTU domain-containing protein 7A (OTUD7A) (Homo sapiens (Human)).